Here is a 416-residue protein sequence, read N- to C-terminus: UDP-N-acetylmuramoylalanine--D-glutamate ligase (416 aa).

104 to 110 (GSNGKST) serves as a coordination point for ATP.

This sequence belongs to the MurCDEF family.

The protein localises to the cytoplasm. It catalyses the reaction UDP-N-acetyl-alpha-D-muramoyl-L-alanine + D-glutamate + ATP = UDP-N-acetyl-alpha-D-muramoyl-L-alanyl-D-glutamate + ADP + phosphate + H(+). It participates in cell wall biogenesis; peptidoglycan biosynthesis. In terms of biological role, cell wall formation. Catalyzes the addition of glutamate to the nucleotide precursor UDP-N-acetylmuramoyl-L-alanine (UMA). In Francisella tularensis subsp. tularensis (strain FSC 198), this protein is UDP-N-acetylmuramoylalanine--D-glutamate ligase.